The sequence spans 245 residues: 4-hydroxy-tetrahydrodipicolinate reductase (245 aa).

Residues 7-12, 75-77, and 102-105 contribute to the NAD(+) site; these read GAKGKV, GTT, and APNF. His132 serves as the catalytic Proton donor/acceptor. Position 133 (His133) interacts with (S)-2,3,4,5-tetrahydrodipicolinate. Residue Lys136 is the Proton donor of the active site. (S)-2,3,4,5-tetrahydrodipicolinate is bound at residue 142–143; it reads GT.

This sequence belongs to the DapB family.

The protein localises to the cytoplasm. The catalysed reaction is (S)-2,3,4,5-tetrahydrodipicolinate + NAD(+) + H2O = (2S,4S)-4-hydroxy-2,3,4,5-tetrahydrodipicolinate + NADH + H(+). It carries out the reaction (S)-2,3,4,5-tetrahydrodipicolinate + NADP(+) + H2O = (2S,4S)-4-hydroxy-2,3,4,5-tetrahydrodipicolinate + NADPH + H(+). It functions in the pathway amino-acid biosynthesis; L-lysine biosynthesis via DAP pathway; (S)-tetrahydrodipicolinate from L-aspartate: step 4/4. In terms of biological role, catalyzes the conversion of 4-hydroxy-tetrahydrodipicolinate (HTPA) to tetrahydrodipicolinate. The sequence is that of 4-hydroxy-tetrahydrodipicolinate reductase from Mycolicibacterium gilvum (strain PYR-GCK) (Mycobacterium gilvum (strain PYR-GCK)).